The sequence spans 120 residues: Large ribosomal subunit protein bL19 (120 aa).

The protein belongs to the bacterial ribosomal protein bL19 family.

Its function is as follows. This protein is located at the 30S-50S ribosomal subunit interface and may play a role in the structure and function of the aminoacyl-tRNA binding site. The polypeptide is Large ribosomal subunit protein bL19 (Crocosphaera subtropica (strain ATCC 51142 / BH68) (Cyanothece sp. (strain ATCC 51142))).